A 271-amino-acid chain; its full sequence is tRNA pseudouridine synthase A (271 aa).

The active-site Nucleophile is the D52. Residue Y110 coordinates substrate.

This sequence belongs to the tRNA pseudouridine synthase TruA family. As to quaternary structure, homodimer.

The catalysed reaction is uridine(38/39/40) in tRNA = pseudouridine(38/39/40) in tRNA. Functionally, formation of pseudouridine at positions 38, 39 and 40 in the anticodon stem and loop of transfer RNAs. The sequence is that of tRNA pseudouridine synthase A from Burkholderia mallei (strain NCTC 10247).